We begin with the raw amino-acid sequence, 177 residues long: Cyclic pyranopterin monophosphate synthase 3 (177 aa).

Substrate-binding positions include 79-81 (LCH) and 116-117 (ME). Residue Asp-131 is part of the active site. A disordered region spans residues 150 to 177 (KSGGRSGHYRRHDADVKPSDGGSTEDGC).

It belongs to the MoaC family. Homohexamer; trimer of dimers.

The catalysed reaction is (8S)-3',8-cyclo-7,8-dihydroguanosine 5'-triphosphate = cyclic pyranopterin phosphate + diphosphate. Its pathway is cofactor biosynthesis; molybdopterin biosynthesis. In terms of biological role, catalyzes the conversion of (8S)-3',8-cyclo-7,8-dihydroguanosine 5'-triphosphate to cyclic pyranopterin monophosphate (cPMP). The chain is Cyclic pyranopterin monophosphate synthase 3 (moaC3) from Mycobacterium bovis (strain ATCC BAA-935 / AF2122/97).